A 119-amino-acid polypeptide reads, in one-letter code: MPAPVEIQQATLSKFIDAWKRWNADDFIGLWSDSFTFQVLPFSDGKPTRPRDMIAPMYRNFIETLTNYKAIFIAFSESGDKIERLEEVNDNAFRKEWDPKCHAYWGYGQPPKAKAVAGS.

The protein operates within pigment biosynthesis. In terms of biological role, part of the ergochrome gene cluster responsible for the typical purple-black color of the ergot sclerotia. The ergochrome gene cluster produces several ergot pigments including the yellow ergochrome secalonic acid and its derivatives, as well as the red anthraquinones endocrocin and clavorubin. The pathway begins with the synthesis of atrochrysone thioester by the polyketide synthase (PKS) CPUR_05437. The atrochrysone carboxyl ACP thioesterase CPUR_05436 then breaks the thioester bond and releases the atrochrysone carboxylic acid from CPUR_05437. The atrochrysone carboxylic acid is then converted to atrochrysone which is further transformed into emodin anthrone. The next step is performed by the anthrone oxygenase CPUR_05434 that catalyzes the oxidation of emodinanthrone to emodin. Emodin is further modified to yield monodictyphenone via several steps involving CPUR_05427, CPUR_05428, CPUR_05429 and CPUR_05430. The short chain dehydrogenase/reductase CPUR_05418 then catalyzes the C-5 ketoreduction to give the xanthone skeleton of the monomeric units. Ergochromes formation requires further dimerization steps of different xanthone units, probably catalyzed by the cytochrome P450 monooxygenase CPUR_05419. CPUR_05425, CPUR_05426 and CPUR_05431 are unique to Claviceps, thus it is likely that they are involved in further modification of xanthone units or in their dimerization. The yellow ergochromes and the red anthraquinone pigments endocrocin and clavorubin are products from the same PKS derived precursors and the latter are likely shunt products in the pathway of xanthone biosynthesis. It is proposed that atrochrysone carboxylic acid released from the PKS CPUR_05437 can also be converted to endocrocin anthrone which is further oxidized into endocrocin by CPUR_05435. Endocrocin could be then modified to clavorubin, possibly by CPUR_05423 and CPUR_05431. Clavorubin is the principal anthraquinone metabolite produced by the cluster with a much higher yield compared to endocrocin. The polypeptide is Ergochrome gene cluster protein CPUR_05426 (Claviceps purpurea (strain 20.1) (Ergot fungus)).